The following is a 397-amino-acid chain: Probable pyruvate dehydrogenase E1 component subunit alpha, mitochondrial (397 aa).

His-86, Tyr-112, Arg-113, Gly-159, Val-161, Asp-190, Gly-191, Ala-192, and Asn-219 together coordinate pyruvate. Residues Tyr-112, Arg-113, Gly-159, Val-161, Asp-190, Gly-191, Ala-192, Asn-219, and His-286 each contribute to the thiamine diphosphate site. Residue Asp-190 participates in Mg(2+) binding. Residue Asn-219 coordinates Mg(2+).

Tetramer of 2 alpha and 2 beta subunits. It depends on thiamine diphosphate as a cofactor. Mg(2+) is required as a cofactor.

It localises to the mitochondrion matrix. The catalysed reaction is N(6)-[(R)-lipoyl]-L-lysyl-[protein] + pyruvate + H(+) = N(6)-[(R)-S(8)-acetyldihydrolipoyl]-L-lysyl-[protein] + CO2. E1 activity is regulated by phosphorylation (inactivation) and dephosphorylation (activation) of the alpha subunit. The pyruvate dehydrogenase complex catalyzes the overall conversion of pyruvate to acetyl-CoA and CO(2). It contains multiple copies of three enzymatic components: pyruvate dehydrogenase (E1), dihydrolipoamide acetyltransferase (E2) and lipoamide dehydrogenase (E3). The sequence is that of Probable pyruvate dehydrogenase E1 component subunit alpha, mitochondrial from Caenorhabditis elegans.